Consider the following 968-residue polypeptide: Phosphoenolpyruvate carboxylase 3 (968 aa).

The residue at position 11 (Ser-11) is a Phosphoserine. Catalysis depends on residues His-173 and Lys-603. Position 705 is a phosphoserine (Ser-705).

This sequence belongs to the PEPCase type 1 family. In terms of assembly, homotetramer. It depends on Mg(2+) as a cofactor. As to expression, expressed in roots and siliques, and to a lower extent in stems, leaves and flowers.

It is found in the cytoplasm. It catalyses the reaction oxaloacetate + phosphate = phosphoenolpyruvate + hydrogencarbonate. Its activity is regulated as follows. By light-reversible phosphorylation. Through the carboxylation of phosphoenolpyruvate (PEP) it forms oxaloacetate, a four-carbon dicarboxylic acid source for the tricarboxylic acid cycle. In Arabidopsis thaliana (Mouse-ear cress), this protein is Phosphoenolpyruvate carboxylase 3 (PPC3).